A 133-amino-acid chain; its full sequence is MCAKSLLLVFGILLGLSHLSLSQNWATFQQKHIINTPIINCNTIMDNNIYIVGGQCKRVNTFIISSATTVKAICTGVINMNVLSTTRFQLNTCTRTSITPRPCPYSSRTETNYICVKCENQYPVHFAGIGRCP.

Positions 1–22 are cleaved as a signal peptide; the sequence is MCAKSLLLVFGILLGLSHLSLS. Position 23 is a pyrrolidone carboxylic acid (Gln23). The Proton acceptor role is filled by His32. 4 disulfides stabilise this stretch: Cys41-Cys93, Cys56-Cys103, Cys74-Cys118, and Cys115-Cys132. 57–61 contacts substrate; it reads KRVNT. His125 functions as the Proton donor in the catalytic mechanism.

It belongs to the pancreatic ribonuclease family. Monomer.

It is found in the secreted. In terms of biological role, preferentially cleaves single-stranded RNA at pyrimidine residues with a 3'flanking guanine. Hydrolyzes poly(U) and poly(C) as substrates, and prefers the former. The S-lectins in frog eggs may be involved in the fertilization and development of the frog embryo. This lectin agglutinates various animal cells, including normal lymphocytes, erythrocytes, and fibroblasts of animal and human origin. It is cytotoxic against several tumor cells. The chain is Oocytes ribonuclease (RCR) from Aquarana catesbeiana (American bullfrog).